The following is a 563-amino-acid chain: UvrABC system protein C (563 aa).

The GIY-YIG domain occupies 12–87 (NKSGVYIFKK…IYKYKPKYNA (76 aa)). The region spanning 194–229 (SNVISFIKLKMEQHARLLDFENAAKYRDILLNFNKV) is the UVR domain.

The protein belongs to the UvrC family. As to quaternary structure, interacts with UvrB in an incision complex.

Its subcellular location is the cytoplasm. Functionally, the UvrABC repair system catalyzes the recognition and processing of DNA lesions. UvrC both incises the 5' and 3' sides of the lesion. The N-terminal half is responsible for the 3' incision and the C-terminal half is responsible for the 5' incision. The chain is UvrABC system protein C from Fervidobacterium nodosum (strain ATCC 35602 / DSM 5306 / Rt17-B1).